A 529-amino-acid chain; its full sequence is Peptide chain release factor 3 (529 aa).

A tr-type G domain is found at 11–280; that stretch reads AKRRTFAIIS…GLVEWAPAPM (270 aa). GTP-binding positions include 20–27, 88–92, and 142–145; these read SHPDAGKT, DTPGH, and NKLD.

Belongs to the TRAFAC class translation factor GTPase superfamily. Classic translation factor GTPase family. PrfC subfamily.

Its subcellular location is the cytoplasm. In terms of biological role, increases the formation of ribosomal termination complexes and stimulates activities of RF-1 and RF-2. It binds guanine nucleotides and has strong preference for UGA stop codons. It may interact directly with the ribosome. The stimulation of RF-1 and RF-2 is significantly reduced by GTP and GDP, but not by GMP. The polypeptide is Peptide chain release factor 3 (Shigella sonnei (strain Ss046)).